Reading from the N-terminus, the 2240-residue chain is Death-inducer obliterator 1 (2240 aa).

An N-acetylmethionine modification is found at Met1. Residues 1–25 show a composition bias toward basic and acidic residues; that stretch reads MDDKGDPSNEEAPKAIKPTSKEFRK. The interval 1-259 is disordered; sequence MDDKGDPSNE…EPGDLGRPKP (259 aa). Residues Ser60 and Ser114 each carry the phosphoserine modification. Over residues 111–130 the composition is skewed to polar residues; the sequence is SEGSVESASETRSGPQSAST. Residues 132–146 show a composition bias toward basic and acidic residues; it reads VKERPASSEKVKGGD. Residues 147-156 show a composition bias toward acidic residues; it reads DHDDTSDSDS. Residue Thr151 is modified to Phosphothreonine. Residues Ser152 and Ser154 each carry the phosphoserine modification. 2 short sequence motifs (nuclear localization signal) span residues 165-173 and 185-193; these read QNRLRRKRE and QSRLRKKRR. Positions 172–181 are enriched in basic and acidic residues; it reads REQEPTERPL. Basic and acidic residues predominate over residues 230-246; the sequence is GKDDRESKLEGKAAQDI. Lys247 is covalently cross-linked (Glycyl lysine isopeptide (Lys-Gly) (interchain with G-Cter in SUMO2)). The PHD-type zinc finger occupies 268–322; it reads ALYCICRQPHNNRFMICCDRCEEWFHGDCVGISEARGRLLERNGEDYICPNCTIL. Disordered stretches follow at residues 431-456, 501-567, 584-618, 773-826, 860-947, 1013-1045, 1206-1427, 1453-1472, and 1517-2240; these read SGKE…PKCG, STPS…RNLV, KKPP…GPAP, RPAR…EKST, VPSA…EDLS, LAKP…PEGD, GELD…VAYD, RRNS…TPSL, and SDAL…ASQA. Residues 433–451 are compositionally biased toward basic and acidic residues; that stretch reads KEQKPKPKEKMKMKPEKPS. A compositionally biased stretch (polar residues) spans 501 to 510; it reads STPSWASDHN. Position 523 is a phosphoserine (Ser523). Residues 530 to 541 show a composition bias toward basic and acidic residues; the sequence is STKEDRRSEEKA. 2 stretches are compositionally biased toward low complexity: residues 542–551 and 604–618; these read AAMAASKKTA and PSSG…GPAP. The TFIIS central domain maps to 670 to 790; it reads IRQNIRRSLK…SRTKLHNESK (121 aa). Over residues 773–791 the composition is skewed to basic and acidic residues; the sequence is RPARSVMESRTKLHNESKK. Residues 800-815 are compositionally biased toward acidic residues; it reads PDLEDSPPVSDSEEQQ. Residues Ser805 and Ser809 each carry the phosphoserine modification. Residues 878 to 890 show a composition bias toward basic and acidic residues; that stretch reads VKKEDLKSKHDSS. Residue Lys879 forms a Glycyl lysine isopeptide (Lys-Gly) (interchain with G-Cter in SUMO2) linkage. Phosphoserine occurs at positions 889 and 898. A compositionally biased stretch (pro residues) spans 930–941; that stretch reads PGPPGDGHPEPS. Phosphoserine is present on residues Ser1019, Ser1030, and Ser1040. The segment covering 1207–1220 has biased composition (basic and acidic residues); that stretch reads ELDKMDEKRTRLQP. Position 1244 is a phosphotyrosine (Tyr1244). Thr1256 is modified (phosphothreonine). Pro residues predominate over residues 1258-1271; sequence PGSPPPPPPLPEPP. Residues Ser1260 and Ser1312 each carry the phosphoserine modification. The span at 1276-1313 shows a compositional bias: low complexity; sequence LSSLKPAAPSPATAATTAAAASTAASSTASSASKTASP. A compositionally biased stretch (acidic residues) spans 1376 to 1392; that stretch reads LEEEEDDRPYDPEEEYD. Over residues 1393-1424 the composition is skewed to basic and acidic residues; it reads PERAFDTQLVERGRRHEVERAPEAAAAEREEV. The residue at position 1456 (Ser1456) is a Phosphoserine. The residue at position 1469 (Thr1469) is a Phosphothreonine. Phosphoserine occurs at positions 1522 and 1714. Over residues 1771–1782 the composition is skewed to pro residues; that stretch reads FPGPRGPAPPFP. Arg1835 is modified (omega-N-methylarginine). The segment covering 1842–1856 has biased composition (basic and acidic residues); that stretch reads FEERKDPHGEKREFQ. An asymmetric dimethylarginine mark is found at Arg1893, Arg1894, Arg1977, Arg1982, Arg1993, Arg2008, and Arg2024. The segment covering 2044–2059 has biased composition (low complexity); that stretch reads AGPPSALSSSAPGQGP. 2 stretches are compositionally biased toward basic and acidic residues: residues 2069-2101 and 2109-2230; these read DFRE…KPLE and ASED…EASR.

Interacts specifically (via PHD-type zinc finger) with histone H3 that is trimethylated at 'Lys-4' (H3K4me3), histone phosphorylation at 'Thr-3' or 'Thr-6' disrupts this binding and promotes translocation of DIDO1 from chromatin to the mitotic spindle during mitosis. Ubiquitous.

The protein resides in the cytoplasm. The protein localises to the nucleus. It is found in the cytoskeleton. It localises to the spindle. Functionally, putative transcription factor, weakly pro-apoptotic when overexpressed. Tumor suppressor. Required for early embryonic stem cell development. Its function is as follows. Displaces isoform 4 at the onset of differentiation, required for repression of stemness genes. The chain is Death-inducer obliterator 1 (DIDO1) from Homo sapiens (Human).